The primary structure comprises 160 residues: Ureidoglycolate lyase (160 aa).

The protein belongs to the ureidoglycolate lyase family. As to quaternary structure, homodimer. Ni(2+) serves as cofactor.

It carries out the reaction (S)-ureidoglycolate = urea + glyoxylate. Its pathway is nitrogen metabolism; (S)-allantoin degradation. Functionally, catalyzes the catabolism of the allantoin degradation intermediate (S)-ureidoglycolate, generating urea and glyoxylate. Involved in the utilization of allantoin as nitrogen source. The chain is Ureidoglycolate lyase from Salmonella gallinarum (strain 287/91 / NCTC 13346).